Here is a 490-residue protein sequence, read N- to C-terminus: Bifunctional NAD(P)H-hydrate repair enzyme Nnr (490 aa).

Residues 1 to 204 (MKEIDELTIK…NIGHPVHLIN (204 aa)) form the YjeF N-terminal domain. An NAD(P)H-hydrate epimerase region spans residues 1 to 204 (MKEIDELTIK…NIGHPVHLIN (204 aa)). An NADPHX 1; for epimerase activity region spans residues 51–55 (NNGGD). Positions 52 and 114 each coordinate K(+). Residues 118–124 (GTGLRGE) are NADPHX 1; for epimerase activity. (6S)-NADPHX contacts are provided by Tyr129 and Asp147. Residue Ser150 coordinates K(+). Residues 212 to 488 (TREMVRSLLP…RLIPEAIRRL (277 aa)) form the YjeF C-terminal domain. The segment at 212–490 (TREMVRSLLP…IPEAIRRLKE (279 aa)) is ADP-dependent (S)-NAD(P)H-hydrate dehydratase. Position 317 (Gly317) interacts with (6S)-NADPHX. Positions 366–372 (HPGEMAR) are NADPHX 2; for dehydratase activity. Residues 402 to 406 (KSATT) and 421 to 430 (NTGLSKGGSG) each bind ADP. A (6S)-NADPHX-binding site is contributed by Asp431.

This sequence in the N-terminal section; belongs to the NnrE/AIBP family. In the C-terminal section; belongs to the NnrD/CARKD family. K(+) serves as cofactor.

It carries out the reaction (6S)-NADHX + ADP = AMP + phosphate + NADH + H(+). It catalyses the reaction (6S)-NADPHX + ADP = AMP + phosphate + NADPH + H(+). The catalysed reaction is (6R)-NADHX = (6S)-NADHX. The enzyme catalyses (6R)-NADPHX = (6S)-NADPHX. Bifunctional enzyme that catalyzes the epimerization of the S- and R-forms of NAD(P)HX and the dehydration of the S-form of NAD(P)HX at the expense of ADP, which is converted to AMP. This allows the repair of both epimers of NAD(P)HX, a damaged form of NAD(P)H that is a result of enzymatic or heat-dependent hydration. This is Bifunctional NAD(P)H-hydrate repair enzyme Nnr (nnr) from Thermotoga maritima (strain ATCC 43589 / DSM 3109 / JCM 10099 / NBRC 100826 / MSB8).